We begin with the raw amino-acid sequence, 420 residues long: Na(+)/H(+) antiporter NhaA (420 aa).

Transmembrane regions (helical) follow at residues 34-54, 69-89, 107-127, 141-161, 168-190, 194-213, 271-291, 301-321, 342-362, and 374-394; these read TTGGMLMLAATVAALLWANLG, LTIEQWAADGLLTVFFFIAGL, LVPIVAAVCGMVFPAGIYTLF, IPMATDIAFALAVLAIVGAGL, FLLTLAIADDLGSIIVIAVFFST, IWWLAGAIACIGLWGVMQHF, WSAGVVVPFFALMSAGVHVSG, PISLGIVCGLILGKVIGITLG, IIAVAVLAGIGFTVSMLMTDL, and AKASVLMASFLAAILGGAMLH.

This sequence belongs to the NhaA Na(+)/H(+) (TC 2.A.33) antiporter family.

It localises to the cell membrane. The enzyme catalyses Na(+)(in) + 2 H(+)(out) = Na(+)(out) + 2 H(+)(in). Functionally, na(+)/H(+) antiporter that extrudes sodium in exchange for external protons. This Cutibacterium acnes (strain DSM 16379 / KPA171202) (Propionibacterium acnes) protein is Na(+)/H(+) antiporter NhaA.